Consider the following 187-residue polypeptide: Ribosome-recycling factor (187 aa).

Belongs to the RRF family.

It localises to the cytoplasm. In terms of biological role, responsible for the release of ribosomes from messenger RNA at the termination of protein biosynthesis. May increase the efficiency of translation by recycling ribosomes from one round of translation to another. The sequence is that of Ribosome-recycling factor from Orientia tsutsugamushi (strain Ikeda) (Rickettsia tsutsugamushi).